A 62-amino-acid polypeptide reads, in one-letter code: Protein DsrB (62 aa).

This sequence belongs to the DsrB family.

The polypeptide is Protein DsrB (Shigella flexneri serotype 5b (strain 8401)).